We begin with the raw amino-acid sequence, 322 residues long: AA9 family lytic polysaccharide monooxygenase B (322 aa).

A signal peptide spans 1–17 (MFSKSIIAASLLTAVTA). His18 is a Cu(2+) binding site. Residues Asn53 and Asn68 are each glycosylated (N-linked (GlcNAc...) asparagine). A disulfide bond links Cys56 and Cys173. His87 provides a ligand contact to Cu(2+). 2 N-linked (GlcNAc...) asparagine glycosylation sites follow: Asn121 and Asn133. Residues His159 and Gln168 each contribute to the O2 site. Position 170 (Tyr170) interacts with Cu(2+). N-linked (GlcNAc...) asparagine glycosylation is present at Asn197.

The protein belongs to the polysaccharide monooxygenase AA9 family. Requires Cu(2+) as cofactor.

The protein localises to the secreted. It catalyses the reaction [(1-&gt;4)-beta-D-glucosyl]n+m + reduced acceptor + O2 = 4-dehydro-beta-D-glucosyl-[(1-&gt;4)-beta-D-glucosyl]n-1 + [(1-&gt;4)-beta-D-glucosyl]m + acceptor + H2O.. In terms of biological role, lytic polysaccharide monooxygenase (LPMO) that depolymerizes crystalline and amorphous polysaccharides via the oxidation of scissile alpha- or beta-(1-4)-glycosidic bonds, yielding C1 and C4 oxidation products. Catalysis by LPMOs requires the reduction of the active-site copper from Cu(II) to Cu(I) by a reducing agent and H(2)O(2) or O(2) as a cosubstrate. This Botryotinia fuckeliana (strain B05.10) (Noble rot fungus) protein is AA9 family lytic polysaccharide monooxygenase B.